The chain runs to 126 residues: Holo-[acyl-carrier-protein] synthase (126 aa).

Positions 9 and 58 each coordinate Mg(2+).

The protein belongs to the P-Pant transferase superfamily. AcpS family. The cofactor is Mg(2+).

The protein localises to the cytoplasm. It catalyses the reaction apo-[ACP] + CoA = holo-[ACP] + adenosine 3',5'-bisphosphate + H(+). Its function is as follows. Transfers the 4'-phosphopantetheine moiety from coenzyme A to a Ser of acyl-carrier-protein. This is Holo-[acyl-carrier-protein] synthase from Citrobacter koseri (strain ATCC BAA-895 / CDC 4225-83 / SGSC4696).